The chain runs to 133 residues: ATP synthase epsilon chain (133 aa).

Residues 103-133 (VSQMEGQEPSTEKIKAQQNFNRARARVQATK) are disordered.

It belongs to the ATPase epsilon chain family. F-type ATPases have 2 components, CF(1) - the catalytic core - and CF(0) - the membrane proton channel. CF(1) has five subunits: alpha(3), beta(3), gamma(1), delta(1), epsilon(1). CF(0) has three main subunits: a, b and c.

The protein resides in the cellular thylakoid membrane. Functionally, produces ATP from ADP in the presence of a proton gradient across the membrane. The protein is ATP synthase epsilon chain of Prochlorococcus marinus (strain MIT 9313).